A 236-amino-acid chain; its full sequence is MGVEGCTKCIKYLLFVFNFVFWLAGGVILGVALWLRHDPQTTNLLYLELGDKPAPNTFYVGIYILIAVGAVMMFVGFLGCYGAIQESQCLLGTFFTCLVILFACEVAAGIWGFVNKDQIAKDVKQFYDQALQQAVVDDDANNAKAVVKTFHETLNCCGSSTLSALTTSMLKNNLCPSGSSIISNLFKEDCHQKIDELFSGKLYLIGIAAIVVAVIMIFEMILSMVLCCGIRNSSVY.

Residues 1–12 lie on the Cytoplasmic side of the membrane; the sequence is MGVEGCTKCIKY. A helical transmembrane segment spans residues 13 to 33; it reads LLFVFNFVFWLAGGVILGVAL. Residues 34–63 lie on the Extracellular side of the membrane; that stretch reads WLRHDPQTTNLLYLELGDKPAPNTFYVGIY. The chain crosses the membrane as a helical span at residues 64 to 84; it reads ILIAVGAVMMFVGFLGCYGAI. Over 85 to 89 the chain is Cytoplasmic; it reads QESQC. The helical transmembrane segment at 90–112 threads the bilayer; it reads LLGTFFTCLVILFACEVAAGIWG. Over 113 to 201 the chain is Extracellular; sequence FVNKDQIAKD…QKIDELFSGK (89 aa). 2 cysteine pairs are disulfide-bonded: cysteine 156/cysteine 190 and cysteine 157/cysteine 175. Residues 202–224 traverse the membrane as a helical segment; the sequence is LYLIGIAAIVVAVIMIFEMILSM. Cholesterol is bound at residue glutamate 219. The Cytoplasmic portion of the chain corresponds to 225-236; the sequence is VLCCGIRNSSVY.

This sequence belongs to the tetraspanin (TM4SF) family. As to quaternary structure, homodimer. Part of a complex composed of CD19, CR2/CD21, CD81 and IFITM1/CD225 in the membrane of mature B cells. Interacts (via the second extracellular domain) with CD19; this interaction is initiated early during biosynthesis in the ER and enables trafficking of only properly folded CD19. Part of a complex that includes MHC class II/HLA-DR molecules and IFITM1. Interacts with IFITM1. Interacts with IFITM2 and IFITM3. Part of integrin-tetraspanin complex composed of CD9, CD81, beta-1 and beta-2 integrins in the membrane of monocyte/macrophages. Interacts (via the second extracellular domain) with integrin ITGAV:ITGB3. Interacts with CD247/CD3 zeta, ICAM1 and CD9 at the immune synapse on T cell membrane. Part of a GPCR-tetraspanin complex consisting at least of ADGRG1, CD81, possibly CD9, and GNA11 in which CD81 enhances the association of ADGRG1 with GNA11. Part of a complex composed of CD9, CD81, PTGFRN and IGSF8. Interacts directly with IGSF8. Interacts with CD53 and SCIMP. Interacts with SAMHD1 (via its C-terminus). Interacts with glypican GPC3 and with the transcriptional repressor HHEX; binding to GPC3 decreases the availability of free CD81 for binding to HHEX, resulting in nuclear translocation of HHEX and transcriptional repression. Interacts with CLDN1. Interacts with CLDN6 and CLDN9. Not glycosylated. Post-translationally, likely constitutively palmitoylated at low levels. Protein palmitoylation is up-regulated upon coligation of BCR and CD9-C2R-CD81 complexes in lipid rafts.

The protein resides in the cell membrane. Its subcellular location is the basolateral cell membrane. Structural component of specialized membrane microdomains known as tetraspanin-enriched microdomains (TERMs), which act as platforms for receptor clustering and signaling. Essential for trafficking and compartmentalization of CD19 receptor on the surface of activated B cells. Upon initial encounter with microbial pathogens, enables the assembly of CD19-CR2/CD21 and B cell receptor (BCR) complexes at signaling TERMs, lowering the threshold dose of antigen required to trigger B cell clonal expansion and antibody production. In T cells, facilitates the localization of CD247/CD3 zeta at antigen-induced synapses with B cells, providing for costimulation and polarization toward T helper type 2 phenotype. Present in MHC class II compartments, may also play a role in antigen presentation. Can act both as positive and negative regulator of homotypic or heterotypic cell-cell fusion processes. Positively regulates sperm-egg fusion and may be involved in acrosome reaction. In myoblasts, associates with CD9 and PTGFRN and inhibits myotube fusion during muscle regeneration. In macrophages, associates with CD9 and beta-1 and beta-2 integrins, and prevents macrophage fusion into multinucleated giant cells specialized in ingesting complement-opsonized large particles. Also prevents the fusion of mononuclear cell progenitors into osteoclasts in charge of bone resorption. May regulate the compartmentalization of enzymatic activities. In T cells, defines the subcellular localization of dNTPase SAMHD1 and permits its degradation by the proteasome, thereby controlling intracellular dNTP levels. Also involved in cell adhesion and motility. Positively regulates integrin-mediated adhesion of macrophages, particularly relevant for the inflammatory response in the lung. This Saguinus oedipus (Cotton-top tamarin) protein is CD81 protein (CD81).